A 571-amino-acid chain; its full sequence is Phosphomethylpyrimidine synthase (571 aa).

Substrate is bound by residues Asn201, Met230, Tyr259, His295, 315–317 (SRG), 356–359 (DALR), and Glu395. His399 is a Zn(2+) binding site. Tyr422 is a substrate binding site. His463 lines the Zn(2+) pocket. Cys545, Cys548, and Cys553 together coordinate [4Fe-4S] cluster.

This sequence belongs to the ThiC family. Requires [4Fe-4S] cluster as cofactor.

The catalysed reaction is 5-amino-1-(5-phospho-beta-D-ribosyl)imidazole + S-adenosyl-L-methionine = 4-amino-2-methyl-5-(phosphooxymethyl)pyrimidine + CO + 5'-deoxyadenosine + formate + L-methionine + 3 H(+). The protein operates within cofactor biosynthesis; thiamine diphosphate biosynthesis. In terms of biological role, catalyzes the synthesis of the hydroxymethylpyrimidine phosphate (HMP-P) moiety of thiamine from aminoimidazole ribotide (AIR) in a radical S-adenosyl-L-methionine (SAM)-dependent reaction. The sequence is that of Phosphomethylpyrimidine synthase from Chlorobium phaeovibrioides (strain DSM 265 / 1930) (Prosthecochloris vibrioformis (strain DSM 265)).